A 570-amino-acid chain; its full sequence is Hydroxylamine reductase (570 aa).

[4Fe-4S] cluster is bound by residues C5, C8, C17, and C23. The hybrid [4Fe-2O-2S] cluster site is built by H266, E290, C334, C425, C453, C478, E513, and K515. C425 is subject to Cysteine persulfide.

The protein belongs to the HCP family. [4Fe-4S] cluster serves as cofactor. Hybrid [4Fe-2O-2S] cluster is required as a cofactor.

The protein resides in the cytoplasm. The enzyme catalyses A + NH4(+) + H2O = hydroxylamine + AH2 + H(+). In terms of biological role, catalyzes the reduction of hydroxylamine to form NH(3) and H(2)O. In Clostridium botulinum (strain Kyoto / Type A2), this protein is Hydroxylamine reductase.